A 196-amino-acid polypeptide reads, in one-letter code: uncharacterized protein (196 aa).

A helical membrane pass occupies residues 26-46 (ITFFFILLICFICILLLLAIF).

The protein resides in the membrane. This is an uncharacterized protein from Mus musculus (Mouse).